A 290-amino-acid chain; its full sequence is MTQQLPILSLKKIYSGKVRDLYEIDDKRMLMVTSDRLSAFDVILDDPIPRKGEILTQISNFWFNKLAHIMPNHFTGDSVYDVLPKEEADLIRDRAVVCKRLNPIKIESIVRGYLTGSGLKDYKQTGTICGLKLPEGLVEASKLPEAIFTPSSKEEVGNHDINISYAECEKLIGADLAAQVKEKAIALYTVAAEYALTKGIIICDTKFEFGLDENGTLTLMDEVLTPDSSRFWSVDTYQAGTNPPSFDKQFVRDWLENSGWNKQAPAPKVPENIIQKTVDKYQEALDLLTK.

It belongs to the SAICAR synthetase family.

It catalyses the reaction 5-amino-1-(5-phospho-D-ribosyl)imidazole-4-carboxylate + L-aspartate + ATP = (2S)-2-[5-amino-1-(5-phospho-beta-D-ribosyl)imidazole-4-carboxamido]succinate + ADP + phosphate + 2 H(+). It participates in purine metabolism; IMP biosynthesis via de novo pathway; 5-amino-1-(5-phospho-D-ribosyl)imidazole-4-carboxamide from 5-amino-1-(5-phospho-D-ribosyl)imidazole-4-carboxylate: step 1/2. This chain is Phosphoribosylaminoimidazole-succinocarboxamide synthase (purC), found in Haemophilus influenzae (strain ATCC 51907 / DSM 11121 / KW20 / Rd).